The chain runs to 904 residues: E3 SUMO-protein ligase SIZ1 (904 aa).

Residues M1 to P13 are compositionally biased toward acidic residues. A disordered region spans residues M1–N21. An SAP domain is found at M34–L68. The segment at M122–F170 is disordered. The span at T127 to I136 shows a compositional bias: polar residues. A Phosphoserine modification is found at S132. Over residues R137–R154 the composition is skewed to low complexity. A PINIT domain is found at D162–I314. Residues E344–Q431 form an SP-RING-type zinc finger. Residues C377, H379, C400, and C403 each contribute to the Zn(2+) site. 3 disordered regions span residues I443–R584, S596–P616, and S672–S733. The segment covering L444 to S454 has biased composition (acidic residues). Residues N501–N511 are compositionally biased toward basic and acidic residues. Low complexity predominate over residues D512–N553. 3 stretches are compositionally biased toward polar residues: residues R561 to M574, S596 to S611, and S672 to R683. The span at N684 to L699 shows a compositional bias: low complexity. Residues I721–S733 show a composition bias toward polar residues. S794 is modified (phosphoserine). The tract at residues S794–G904 is required for localization at the bud neck. A compositionally biased stretch (polar residues) spans R877–T894. Residues R877 to G904 are disordered.

This sequence belongs to the PIAS family. Interacts with UBC9 and CDC3. Post-translationally, phosphorylated in early M-phase. In terms of processing, autosumoylated upon ethanol stress.

The protein localises to the cytoplasm. The protein resides in the nucleus. Its subcellular location is the bud neck. The protein operates within protein modification; protein sumoylation. Functionally, acts as an E3 ligase mediating SUMO/Smt3 attachment to septins and PCNA. May be involved in chromosome maintenance. This chain is E3 SUMO-protein ligase SIZ1 (SIZ1), found in Saccharomyces cerevisiae (strain ATCC 204508 / S288c) (Baker's yeast).